The chain runs to 50 residues: U37-theraphotoxin-Cg1b (50 aa).

The signal sequence occupies residues Met-1 to Thr-19.

It belongs to the neurotoxin 10 (Hwtx-1) family. 67 (Jztx-67) subfamily. Expressed by the venom gland.

The protein localises to the secreted. The protein is U37-theraphotoxin-Cg1b of Chilobrachys guangxiensis (Chinese earth tiger tarantula).